The sequence spans 58 residues: Large ribosomal subunit protein uL30 (58 aa).

It belongs to the universal ribosomal protein uL30 family. In terms of assembly, part of the 50S ribosomal subunit.

The chain is Large ribosomal subunit protein uL30 from Pseudomonas aeruginosa (strain LESB58).